The chain runs to 343 residues: tRNA N6-adenosine threonylcarbamoyltransferase (343 aa).

Residues histidine 120 and histidine 124 each coordinate Fe cation. Residues 142-146 (VVSGG), aspartate 175, glycine 188, aspartate 192, and asparagine 281 each bind substrate. A Fe cation-binding site is contributed by aspartate 310.

Belongs to the KAE1 / TsaD family. Fe(2+) is required as a cofactor.

It localises to the cytoplasm. The enzyme catalyses L-threonylcarbamoyladenylate + adenosine(37) in tRNA = N(6)-L-threonylcarbamoyladenosine(37) in tRNA + AMP + H(+). Functionally, required for the formation of a threonylcarbamoyl group on adenosine at position 37 (t(6)A37) in tRNAs that read codons beginning with adenine. Is involved in the transfer of the threonylcarbamoyl moiety of threonylcarbamoyl-AMP (TC-AMP) to the N6 group of A37, together with TsaE and TsaB. TsaD likely plays a direct catalytic role in this reaction. This chain is tRNA N6-adenosine threonylcarbamoyltransferase, found in Bacillus thuringiensis subsp. konkukian (strain 97-27).